The sequence spans 170 residues: Calcineurin subunit B type 2 (170 aa).

4 consecutive EF-hand domains span residues 18–46 (DEIR…FMSL), 50–85 (QQNP…FSVK), 87–122 (DKLS…MVGN), and 128–163 (QLQQ…TDIH). 19 residues coordinate Ca(2+): aspartate 31, aspartate 33, serine 35, glutamate 42, aspartate 63, aspartate 65, asparagine 67, glutamate 69, glutamate 74, aspartate 100, aspartate 102, aspartate 104, tyrosine 106, glutamate 111, aspartate 141, aspartate 143, aspartate 145, lysine 147, and glutamate 152. Serine 35 bears the Phosphoserine mark.

This sequence belongs to the calcineurin regulatory subunit family. In terms of assembly, composed of a catalytic subunit (A) and a regulatory subunit (B). Interacts with sra.

Functionally, calcineurin is a calcium-binding and calmodulin-binding protein found in all cells from yeast to mammals, and a calcium-dependent, calmodulin-stimulated protein phosphatase. The protein is Calcineurin subunit B type 2 (CanB2) of Drosophila melanogaster (Fruit fly).